The following is a 214-amino-acid chain: cAMP-activated global transcriptional regulator Vfr (214 aa).

3',5'-cyclic AMP contacts are provided by residues arginine 59 to glutamate 60, glycine 73 to leucine 75, arginine 87 to serine 88, threonine 132 to threonine 133, arginine 179, and arginine 185. In terms of domain architecture, HTH crp-type spans leucine 142–arginine 214. The segment at residues arginine 174–lysine 193 is a DNA-binding region (H-T-H motif).

In terms of assembly, homodimer.

Global cAMP-dependent transcriptional regulator that controls virulence gene expression by distinct cAMP-dependent and -independent mechanisms, which allow to fine tune its virulence program in response to specific host cues or environments. Controls the expression of many regulatory targets including type II, type III and type IV secretion systems, flagellar-mediated motility, and quorum sensing systems. Transcriptional control is exerted by binding to a well-characterized consensus site (5'-ANWWTGNGAWNYAGWTCACAT) within target promoters. Directly binds to the toxA upstream region to regulate exotoxin A production, to the lasR gene promoter to activate the las quorum-sensing system or to the exsA promoter to regulate type III secretion system. Autoregulates as well its own expression. The polypeptide is cAMP-activated global transcriptional regulator Vfr (vfr) (Pseudomonas aeruginosa (strain ATCC 15692 / DSM 22644 / CIP 104116 / JCM 14847 / LMG 12228 / 1C / PRS 101 / PAO1)).